A 469-amino-acid polypeptide reads, in one-letter code: Serine hydroxymethyltransferase, cytosolic (469 aa).

N6-(pyridoxal phosphate)lysine is present on Lys-248.

It belongs to the SHMT family. As to quaternary structure, homotetramer. It depends on pyridoxal 5'-phosphate as a cofactor.

Its subcellular location is the cytoplasm. The enzyme catalyses (6R)-5,10-methylene-5,6,7,8-tetrahydrofolate + glycine + H2O = (6S)-5,6,7,8-tetrahydrofolate + L-serine. It participates in one-carbon metabolism; tetrahydrofolate interconversion. In terms of biological role, interconversion of serine and glycine. The chain is Serine hydroxymethyltransferase, cytosolic (SHM2) from Eremothecium gossypii (strain ATCC 10895 / CBS 109.51 / FGSC 9923 / NRRL Y-1056) (Yeast).